The sequence spans 187 residues: Reactive Intermediate Deaminase A, chloroplastic (187 aa).

A chloroplast-targeting transit peptide spans 1-58; sequence MTWSVFRSINTPTLDLSTALRSTRTPLVAAGVGCATFAGVSLFRMSSRSPPFASLSVS. Arg-165 contributes to the substrate binding site.

Belongs to the RutC family. In terms of tissue distribution, expressed in leaves, petiols, petals, carpels and shoot apex.

It is found in the plastid. It localises to the chloroplast. It carries out the reaction 2-iminobutanoate + H2O = 2-oxobutanoate + NH4(+). It catalyses the reaction 2-iminopropanoate + H2O = pyruvate + NH4(+). Its pathway is amino-acid biosynthesis; L-isoleucine biosynthesis; 2-oxobutanoate from L-threonine. In terms of biological role, hydrolyzes the Ser-derived enamine/imine product of Thr dehydratase, protecting the plastidial branched-chain aminotransferase BCAT3 (AC Q9M401) from inactivation. Involved in Ile biosynthesis. The polypeptide is Reactive Intermediate Deaminase A, chloroplastic (Arabidopsis thaliana (Mouse-ear cress)).